We begin with the raw amino-acid sequence, 151 residues long: UPF0178 protein PMI1258 (151 aa).

This sequence belongs to the UPF0178 family.

This Proteus mirabilis (strain HI4320) protein is UPF0178 protein PMI1258.